The chain runs to 394 residues: GDNF family receptor alpha-like (394 aa).

The first 18 residues, 1-18 (MIVFIFLAMGLSLENEYT), serve as a signal peptide directing secretion. Topologically, residues 19–351 (SQTNNCTYLR…TGFHSPFNGE (333 aa)) are extracellular. 6 N-linked (GlcNAc...) asparagine glycosylation sites follow: Asn-23, Asn-50, Asn-62, Asn-67, Asn-103, and Asn-116. Cystine bridges form between Cys-131/Cys-189, Cys-138/Cys-144, Cys-155/Cys-167, Cys-162/Cys-210, Cys-191/Cys-198, Cys-220/Cys-291, Cys-227/Cys-233, Cys-244/Cys-275, Cys-252/Cys-258, Cys-269/Cys-316, and Cys-293/Cys-304. The required for interaction with GDF15 stretch occupies residues 149–228 (ASYLKACSAN…TCLSVIRSCQ (80 aa)). A helical transmembrane segment spans residues 352 to 371 (VIYAAMCMTVTCGILLLVMV). Residues 372-394 (KLRTSRISSKARDPSSIQIPGEL) lie on the Cytoplasmic side of the membrane.

Belongs to the GDNFR family. In terms of assembly, interacts (via the extracellular domain) with GDF15 and RET; receptor of GDF15, mediates cellular signaling through interaction with RET after GDF15-binding. Interaction with RET requires previous GDF15-binding. In terms of processing, cleaved and inactivated by MMP14, inhibiting the GDF15-GFRAL aversive response. Expressed in the brainstem, restricted to cells in the area postrema and the immediately adjacent region of the nucleus tractus solitarius (at protein level). Detected at low levels in testis and adipose tissue.

The protein resides in the cell membrane. Its activity is regulated as follows. Specifically inhibited by 3P10 monoclonal antibody. Strongly activated by LY3463251, a long-acting and stable agonist composed of GDF15 conjugated monomeric human IgG4 Fc. Functionally, brainstem-restricted receptor for GDF15 hormone, which triggers an aversive response, characterized by nausea, vomiting, and/or loss of appetite in response to various stresses. The aversive response is both required to reduce continuing exposure to those stresses at the time of exposure and to promote avoidance behavior in the future. The GDF15-GFRAL aversive response is triggered by stresses, such as anticancer drugs (camptothecin or cisplatin), cancers or drugs such as metformin. Upon interaction with its ligand, GDF15, mediates the GDF15-induced autophosphorylation and activation of the RET tyrosine kinase receptor, leading to activation of MAPK- and AKT- signaling pathways. Ligand-binding activates GFRAL-expressing neurons localized in the area postrema and nucleus tractus solitarius of the brainstem. The GDF15-GFRAL signal induces expression of genes involved in metabolism, such as lipid metabolism in adipose tissues. In Homo sapiens (Human), this protein is GDNF family receptor alpha-like.